The chain runs to 335 residues: GTPase Obg (335 aa).

The Obg domain occupies 1–158 (MFVDQITLEL…RLVELELKLI (158 aa)). In terms of domain architecture, OBG-type G spans 159–334 (ADIGLVGFPN…LHDLFKSKLS (176 aa)). Residues 165-172 (GFPNAGKS), 190-194 (FTTLH), 215-218 (DIPG), 285-288 (NKID), and 315-317 (SGL) each bind GTP. Positions 172 and 192 each coordinate Mg(2+).

The protein belongs to the TRAFAC class OBG-HflX-like GTPase superfamily. OBG GTPase family. Monomer. It depends on Mg(2+) as a cofactor.

It localises to the cytoplasm. In terms of biological role, an essential GTPase which binds GTP, GDP and possibly (p)ppGpp with moderate affinity, with high nucleotide exchange rates and a fairly low GTP hydrolysis rate. Plays a role in control of the cell cycle, stress response, ribosome biogenesis and in those bacteria that undergo differentiation, in morphogenesis control. The protein is GTPase Obg of Chlamydia muridarum (strain MoPn / Nigg).